The sequence spans 302 residues: Methionyl-tRNA formyltransferase (302 aa).

Residue 108 to 111 (SLLP) coordinates (6S)-5,6,7,8-tetrahydrofolate. The span at 276 to 288 (REGKRPMEPEEFL) shows a compositional bias: basic and acidic residues. The segment at 276–302 (REGKRPMEPEEFLRGFPLPEGSRAHTA) is disordered.

This sequence belongs to the Fmt family.

It catalyses the reaction L-methionyl-tRNA(fMet) + (6R)-10-formyltetrahydrofolate = N-formyl-L-methionyl-tRNA(fMet) + (6S)-5,6,7,8-tetrahydrofolate + H(+). In terms of biological role, attaches a formyl group to the free amino group of methionyl-tRNA(fMet). The formyl group appears to play a dual role in the initiator identity of N-formylmethionyl-tRNA by promoting its recognition by IF2 and preventing the misappropriation of this tRNA by the elongation apparatus. The sequence is that of Methionyl-tRNA formyltransferase from Cereibacter sphaeroides (strain ATCC 17029 / ATH 2.4.9) (Rhodobacter sphaeroides).